The chain runs to 771 residues: Transcription factor TAS2 (771 aa).

A disordered region spans residues 33–53 (RSRAESASGPQQPSRRQPQTS). Positions 42–51 (PQQPSRRQPQ) are enriched in low complexity. The segment at residues 54-80 (CDLCRSRKIKCDRGTPCGNCRTRGLAC) is a DNA-binding region (zn(2)-C6 fungal-type). The disordered stretch occupies residues 125 to 150 (AVGGSGNAENGAHGDATPRVPLSGLE).

The protein localises to the nucleus. Its function is as follows. Transcription factor; part of the gene cluster that mediates the biosynthesis of the toxin tenuazonic acid (TeA), an inhibitor of protein biosynthesis on ribosomes by suppressing the release of new protein. Directly regulates the expression of the hybrid PKS-NRPS synthetase TAS1 and the subsequent production of TeA. This chain is Transcription factor TAS2, found in Pyricularia oryzae (strain 70-15 / ATCC MYA-4617 / FGSC 8958) (Rice blast fungus).